The primary structure comprises 323 residues: Sphingolipid delta(4)-desaturase/C4-monooxygenase DES2 (323 aa).

A lipid anchor (N-myristoyl glycine) is attached at G2. 2 consecutive transmembrane segments (helical) span residues 45–65 (WAVL…RGLA) and 68–88 (WLLF…TLAI). The Histidine box-1 motif lies at 89-93 (HDISH). Residues 95–99 (AAFGT) form a required for C4-hydroxylase activity region. The short motif at 128 to 132 (HVDHH) is the Histidine box-2 element. The chain crosses the membrane as a helical span at residues 210-231 (VYLLASSFLGLGLHPISGHFVA). The short motif at 259-263 (HVEHH) is the Histidine box-3 element.

The protein belongs to the fatty acid desaturase type 1 family. DEGS subfamily. In terms of tissue distribution, highly expressed in skin, intestine and kidney.

It localises to the endoplasmic reticulum membrane. It carries out the reaction a dihydroceramide + 2 Fe(II)-[cytochrome b5] + O2 + 2 H(+) = a phytoceramide + 2 Fe(III)-[cytochrome b5] + H2O. It catalyses the reaction an N-acylsphinganine + 2 Fe(II)-[cytochrome b5] + O2 + 2 H(+) = an N-acylsphing-4-enine + 2 Fe(III)-[cytochrome b5] + 2 H2O. The enzyme catalyses N-octanoylsphinganine + 2 Fe(II)-[cytochrome b5] + O2 + 2 H(+) = N-octanoyl-4-hydroxysphinganine + 2 Fe(III)-[cytochrome b5] + H2O. The catalysed reaction is an N-acylsphinganine + 2 Fe(II)-[cytochrome b5] + O2 + 2 H(+) = an N-acyl-(4R)-4-hydroxysphinganine + 2 Fe(III)-[cytochrome b5] + H2O. It functions in the pathway membrane lipid metabolism; sphingolipid biosynthesis. In terms of biological role, bifunctional enzyme which acts both as a sphingolipid delta(4)-desaturase and a sphingolipid C4-monooxygenase. This Homo sapiens (Human) protein is Sphingolipid delta(4)-desaturase/C4-monooxygenase DES2.